The following is a 310-amino-acid chain: Proline iminopeptidase (310 aa).

In terms of domain architecture, AB hydrolase-1 spans 41–288; the sequence is LVTLHGGPGG…NSSHMAMWEE (248 aa). The Nucleophile role is filled by S116. The active site involves D255. The active-site Proton donor is H282.

The protein belongs to the peptidase S33 family. In terms of assembly, part of the tricorn proteolytic complex.

The catalysed reaction is Release of N-terminal proline from a peptide.. Cleaves H-Pro-AMC as well as a wide spectrum of amino acid substrates and several peptide substrates without a proline at the N-terminus. In conjunction with the three factors F1, F2 and F3, Tricorn degrades oligopeptides in a sequential manner, yielding free amino acids. The polypeptide is Proline iminopeptidase (pip) (Saccharolobus solfataricus (strain ATCC 35092 / DSM 1617 / JCM 11322 / P2) (Sulfolobus solfataricus)).